We begin with the raw amino-acid sequence, 109 residues long: Small ribosomal subunit protein bS20 (109 aa).

The interval 1-26 is disordered; it reads MANIKSAKKRAIQSEKRRKHNASRRS.

Belongs to the bacterial ribosomal protein bS20 family.

Functionally, binds directly to 16S ribosomal RNA. The sequence is that of Small ribosomal subunit protein bS20 from Hamiltonella defensa subsp. Acyrthosiphon pisum (strain 5AT).